A 771-amino-acid chain; its full sequence is 5-methyltetrahydropteroyltriglutamate--homocysteine methyltransferase (771 aa).

5-methyltetrahydropteroyltri-L-glutamate is bound by residues 16-19 and lysine 117; that span reads RELK. Residues 443–445 and glutamate 496 each bind L-homocysteine; that span reads IGS. Residues 443-445 and glutamate 496 each bind L-methionine; that span reads IGS. 5-methyltetrahydropteroyltri-L-glutamate is bound by residues 527-528 and tryptophan 573; that span reads RC. Residue aspartate 611 coordinates L-homocysteine. Position 611 (aspartate 611) interacts with L-methionine. Glutamate 617 contributes to the 5-methyltetrahydropteroyltri-L-glutamate binding site. Residues histidine 653, cysteine 655, and glutamate 677 each contribute to the Zn(2+) site. Catalysis depends on histidine 706, which acts as the Proton donor. Position 738 (cysteine 738) interacts with Zn(2+).

This sequence belongs to the vitamin-B12 independent methionine synthase family. The cofactor is Zn(2+).

The catalysed reaction is 5-methyltetrahydropteroyltri-L-glutamate + L-homocysteine = tetrahydropteroyltri-L-glutamate + L-methionine. It functions in the pathway amino-acid biosynthesis; L-methionine biosynthesis via de novo pathway; L-methionine from L-homocysteine (MetE route): step 1/1. Catalyzes the transfer of a methyl group from 5-methyltetrahydrofolate to homocysteine resulting in methionine formation. The polypeptide is 5-methyltetrahydropteroyltriglutamate--homocysteine methyltransferase (Stutzerimonas stutzeri (strain A1501) (Pseudomonas stutzeri)).